Here is a 505-residue protein sequence, read N- to C-terminus: Poxin-Schlafen (505 aa).

The segment at 1–238 (MAMFYAHAFG…SKEERVDYVL (238 aa)) is poxin-like. H17 functions as the Proton donor in the catalytic mechanism. The active-site Shared with catalytic histidine of dimeric partner is Y138. The Proton acceptor; shared with catalytic histidine of dimeric partner role is filled by K142. The schlafen-like stretch occupies residues 239–505 (MKRLESIRHL…PDEWVSHIKF (267 aa)).

This sequence in the N-terminal section; belongs to the poxin family. In the C-terminal section; belongs to the Schlafen protein family. Subgroup poxviridae B3 subfamily. Homodimer.

The enzyme catalyses 2',3'-cGAMP + H2O = Gp(2'-5')Ap(3') + H(+). Its function is as follows. Nuclease that is responsible for viral evasion of host cGAS-STING innate immunity. Cleaves 2',3'-cGAMP which is produced by host cGAS following recognition of cytosolic DNA and blocks the subsequent 2',3'-cGAMP-mediated activation of TMEM173/STING, which normally spreads to adjacent cells and activates the interferon and NF-kappa-B immune responses. This Bos taurus (Bovine) protein is Poxin-Schlafen (OPG188).